Consider the following 134-residue polypeptide: Large ribosomal subunit protein eL32 (134 aa).

This sequence belongs to the eukaryotic ribosomal protein eL32 family.

This chain is Large ribosomal subunit protein eL32 (RPL32), found in Tetrahymena thermophila (strain SB210).